A 552-amino-acid polypeptide reads, in one-letter code: 5'-AMP-activated protein kinase catalytic subunit alpha-2 (552 aa).

The region spanning 16-268 (YVLGDTLGVG…IKDIREHEWF (253 aa)) is the Protein kinase domain. ATP-binding positions include 22-30 (LGVGTFGKV) and K45. Catalysis depends on D139, which acts as the Proton acceptor. T172 is subject to Phosphothreonine; by LKB1 and CaMKK2. T258 is modified (phosphothreonine). Positions 291-376 (EAVKEVCEKF…PERMPPLIAD (86 aa)) are AIS. Residue S377 is modified to Phosphoserine. A disordered region spans residues 477–521 (VEQRSGSSTPQRSCSAAGLHRPRSSFDSTTAESHSLSGSLTGSLT). A compositionally biased stretch (polar residues) spans 480–490 (RSGSSTPQRSC). Position 491 is a phosphoserine (S491). The span at 501-510 (SFDSTTAESH) shows a compositional bias: polar residues. Residues 511-521 (SLSGSLTGSLT) show a composition bias toward low complexity.

This sequence belongs to the protein kinase superfamily. CAMK Ser/Thr protein kinase family. SNF1 subfamily. AMPK is a heterotrimer of an alpha catalytic subunit (PRKAA1 or PRKAA2), a beta (PRKAB1 or PRKAB2) and a gamma non-catalytic subunits (PRKAG1, PRKAG2 or PRKAG3). Interacts with FNIP1 and FNIP2. Interacts with DUSP29. Interacts with ARF6. The phosphorylated form at Thr-172 mediated by CamKK2 interacts with ACSS2. Requires Mg(2+) as cofactor. Ubiquitinated. In terms of processing, phosphorylated at Thr-172 by STK11/LKB1 in complex with STE20-related adapter-alpha (STRADA) pseudo kinase and CAB39. Also phosphorylated at Thr-172 by CAMKK2; triggered by a rise in intracellular calcium ions, without detectable changes in the AMP/ATP ratio. CAMKK1 can also phosphorylate Thr-172, but at much lower level. Dephosphorylated by protein phosphatase 2A and 2C (PP2A and PP2C). Phosphorylated by ULK1; leading to negatively regulate AMPK activity and suggesting the existence of a regulatory feedback loop between ULK1 and AMPK. Dephosphorylated by PPM1A and PPM1B at Thr-172 (mediated by STK11/LKB1).

It localises to the cytoplasm. The protein resides in the nucleus. It carries out the reaction L-seryl-[protein] + ATP = O-phospho-L-seryl-[protein] + ADP + H(+). The enzyme catalyses L-threonyl-[protein] + ATP = O-phospho-L-threonyl-[protein] + ADP + H(+). It catalyses the reaction L-seryl-[acetyl-CoA carboxylase] + ATP = O-phospho-L-seryl-[acetyl-CoA carboxylase] + ADP + H(+). The catalysed reaction is L-seryl-[3-hydroxy-3-methylglutaryl-coenzyme A reductase] + ATP = O-phospho-L-seryl-[3-hydroxy-3-methylglutaryl-coenzyme A reductase] + ADP + H(+). Activated by phosphorylation on Thr-172. Binding of AMP to non-catalytic gamma subunit (PRKAG1, PRKAG2 or PRKAG3) results in allosteric activation, inducing phosphorylation on Thr-172. AMP-binding to gamma subunit also sustains activity by preventing dephosphorylation of Thr-172. ADP also stimulates Thr-172 phosphorylation, without stimulating already phosphorylated AMPK. ATP promotes dephosphorylation of Thr-172, rendering the enzyme inactive. Under physiological conditions AMPK mainly exists in its inactive form in complex with ATP, which is much more abundant than AMP. Selectively inhibited by compound C (6-[4-(2-Piperidin-1-yl-ethoxy)-phenyl)]-3-pyridin-4-yl-pyyrazolo[1,5-a] pyrimidine. Activated by resveratrol, a natural polyphenol present in red wine, and S17834, a synthetic polyphenol. Salicylate/aspirin directly activates kinase activity, primarily by inhibiting Thr-172 dephosphorylation. Functionally, catalytic subunit of AMP-activated protein kinase (AMPK), an energy sensor protein kinase that plays a key role in regulating cellular energy metabolism. In response to reduction of intracellular ATP levels, AMPK activates energy-producing pathways and inhibits energy-consuming processes: inhibits protein, carbohydrate and lipid biosynthesis, as well as cell growth and proliferation. AMPK acts via direct phosphorylation of metabolic enzymes, and by longer-term effects via phosphorylation of transcription regulators. Regulates lipid synthesis by phosphorylating and inactivating lipid metabolic enzymes such as ACACA, ACACB, GYS1, HMGCR and LIPE; regulates fatty acid and cholesterol synthesis by phosphorylating acetyl-CoA carboxylase (ACACA and ACACB) and hormone-sensitive lipase (LIPE) enzymes, respectively. Promotes lipolysis of lipid droplets by mediating phosphorylation of isoform 1 of CHKA (CHKalpha2). Regulates insulin-signaling and glycolysis by phosphorylating IRS1, PFKFB2 and PFKFB3. Involved in insulin receptor/INSR internalization. AMPK stimulates glucose uptake in muscle by increasing the translocation of the glucose transporter SLC2A4/GLUT4 to the plasma membrane, possibly by mediating phosphorylation of TBC1D4/AS160. Regulates transcription and chromatin structure by phosphorylating transcription regulators involved in energy metabolism such as CRTC2/TORC2, FOXO3, histone H2B, HDAC5, MEF2C, MLXIPL/ChREBP, EP300, HNF4A, p53/TP53, SREBF1, SREBF2 and PPARGC1A. Acts as a key regulator of glucose homeostasis in liver by phosphorylating CRTC2/TORC2, leading to CRTC2/TORC2 sequestration in the cytoplasm. In response to stress, phosphorylates 'Ser-36' of histone H2B (H2BS36ph), leading to promote transcription. Acts as a key regulator of cell growth and proliferation by phosphorylating FNIP1, TSC2, RPTOR, WDR24 and ATG1/ULK1: in response to nutrient limitation, negatively regulates the mTORC1 complex by phosphorylating RPTOR component of the mTORC1 complex and by phosphorylating and activating TSC2. Also phosphorylates and inhibits GATOR2 subunit WDR24 in response to nutrient limitation, leading to suppress glucose-mediated mTORC1 activation. In response to energetic stress, phosphorylates FNIP1, inactivating the non-canonical mTORC1 signaling, thereby promoting nuclear translocation of TFEB and TFE3, and inducing transcription of lysosomal or autophagy genes. In response to nutrient limitation, promotes autophagy by phosphorylating and activating ATG1/ULK1. In that process also activates WDR45/WIPI4. Phosphorylates CASP6, thereby preventing its autoprocessing and subsequent activation. AMPK also acts as a regulator of circadian rhythm by mediating phosphorylation of CRY1, leading to destabilize it. May regulate the Wnt signaling pathway by phosphorylating CTNNB1, leading to stabilize it. Also acts as a regulator of cellular polarity by remodeling the actin cytoskeleton; probably by indirectly activating myosin. Also phosphorylates CFTR, EEF2K, KLC1, NOS3 and SLC12A1. Plays an important role in the differential regulation of pro-autophagy (composed of PIK3C3, BECN1, PIK3R4 and UVRAG or ATG14) and non-autophagy (composed of PIK3C3, BECN1 and PIK3R4) complexes, in response to glucose starvation. Can inhibit the non-autophagy complex by phosphorylating PIK3C3 and can activate the pro-autophagy complex by phosphorylating BECN1. Upon glucose starvation, promotes ARF6 activation in a kinase-independent manner leading to cell migration. Upon glucose deprivation mediates the phosphorylation of ACSS2 at 'Ser-659', which exposes the nuclear localization signal of ACSS2, required for its interaction with KPNA1 and nuclear translocation. Upon stress, regulates mitochondrial fragmentation through phosphorylation of MTFR1L. This chain is 5'-AMP-activated protein kinase catalytic subunit alpha-2 (PRKAA2), found in Pongo abelii (Sumatran orangutan).